Here is a 27-residue protein sequence, read N- to C-terminus: Cupiennin-3b (27 aa).

Position 27 is a glutamic acid 1-amide (Glu-27).

As to expression, expressed by the venom gland.

The protein localises to the secreted. In Cupiennius salei (American wandering spider), this protein is Cupiennin-3b.